The chain runs to 509 residues: Membrane-bound lytic murein transglycosylase F (509 aa).

The first 40 residues, Met-1–Ser-40, serve as a signal peptide directing secretion. The segment at Arg-41–Val-280 is non-LT domain. The interval Asn-281–Leu-509 is LT domain. The active site involves Glu-327. The tract at residues Asp-474–Ala-500 is disordered.

The protein in the N-terminal section; belongs to the bacterial solute-binding protein 3 family. It in the C-terminal section; belongs to the transglycosylase Slt family.

The protein resides in the cell outer membrane. The catalysed reaction is Exolytic cleavage of the (1-&gt;4)-beta-glycosidic linkage between N-acetylmuramic acid (MurNAc) and N-acetylglucosamine (GlcNAc) residues in peptidoglycan, from either the reducing or the non-reducing ends of the peptidoglycan chains, with concomitant formation of a 1,6-anhydrobond in the MurNAc residue.. Murein-degrading enzyme that degrades murein glycan strands and insoluble, high-molecular weight murein sacculi, with the concomitant formation of a 1,6-anhydromuramoyl product. Lytic transglycosylases (LTs) play an integral role in the metabolism of the peptidoglycan (PG) sacculus. Their lytic action creates space within the PG sacculus to allow for its expansion as well as for the insertion of various structures such as secretion systems and flagella. The protein is Membrane-bound lytic murein transglycosylase F of Hahella chejuensis (strain KCTC 2396).